We begin with the raw amino-acid sequence, 87 residues long: Omega-lycotoxin-Am1a (87 aa).

A signal peptide spans 1–17; it reads MKLSIFFVLFFIAIAYC. Positions 18–40 are excised as a propeptide; that stretch reads QPEFLDDEEDEVEETLPVAEEGR. 4 disulfide bridges follow: Cys44–Cys59, Cys51–Cys64, Cys58–Cys84, and Cys66–Cys82.

It belongs to the neurotoxin omega-lctx family. As to expression, expressed by the venom gland.

The protein resides in the secreted. Its function is as follows. Modulates Cav2.1/CACNA1A voltage-gated calcium channels (P/Q-type currents) in rat cerebellar Purkinje cells and hippocampal CA1-CA3 neurons. At saturating concentrations (&gt;10 nM) decelerates activation kinetics and slightly increases peak amplitude without affecting deactivation kinetics. In vivo, does not cause death when intravenously injected into mice. In rat models, through its activity on Cav2.1/CACNA1A, has an ameliorative effect on memory defects provoked by hyperstimulation of N-methyl-D-aspartate receptors (NMDARs) in the hippocampus. This chain is Omega-lycotoxin-Am1a, found in Alopecosa marikovskyi (Wolf spider).